Consider the following 106-residue polypeptide: UPF0145 protein TM_0763 (106 aa).

The protein belongs to the UPF0145 family.

The polypeptide is UPF0145 protein TM_0763 (Thermotoga maritima (strain ATCC 43589 / DSM 3109 / JCM 10099 / NBRC 100826 / MSB8)).